The primary structure comprises 548 residues: CTP synthase (548 aa).

Residues 1-276 (MPTELTDYDP…DQYVMEQLGL (276 aa)) are amidoligase domain. S25 serves as a coordination point for CTP. UTP is bound at residue S25. Residue 26–31 (GLGKGI) participates in ATP binding. Y66 lines the L-glutamine pocket. D83 contacts ATP. The Mg(2+) site is built by D83 and E151. Residues 158–160 (DIE), 197–202 (KTKPTQ), and K233 each bind CTP. UTP-binding positions include 197 to 202 (KTKPTQ) and K233. The 239-residue stretch at 303–541 (DIALVGKYAM…VETILETTDT (239 aa)) folds into the Glutamine amidotransferase type-1 domain. An L-glutamine-binding site is contributed by G363. C390 (nucleophile; for glutamine hydrolysis) is an active-site residue. L-glutamine-binding positions include 391–394 (LGFQ), E414, and R471. Residues H514 and E516 contribute to the active site.

This sequence belongs to the CTP synthase family. As to quaternary structure, homotetramer.

The catalysed reaction is UTP + L-glutamine + ATP + H2O = CTP + L-glutamate + ADP + phosphate + 2 H(+). It carries out the reaction L-glutamine + H2O = L-glutamate + NH4(+). It catalyses the reaction UTP + NH4(+) + ATP = CTP + ADP + phosphate + 2 H(+). Its pathway is pyrimidine metabolism; CTP biosynthesis via de novo pathway; CTP from UDP: step 2/2. Its activity is regulated as follows. Allosterically activated by GTP, when glutamine is the substrate; GTP has no effect on the reaction when ammonia is the substrate. The allosteric effector GTP functions by stabilizing the protein conformation that binds the tetrahedral intermediate(s) formed during glutamine hydrolysis. Inhibited by the product CTP, via allosteric rather than competitive inhibition. Catalyzes the ATP-dependent amination of UTP to CTP with either L-glutamine or ammonia as the source of nitrogen. Regulates intracellular CTP levels through interactions with the four ribonucleotide triphosphates. In Natronomonas pharaonis (strain ATCC 35678 / DSM 2160 / CIP 103997 / JCM 8858 / NBRC 14720 / NCIMB 2260 / Gabara) (Halobacterium pharaonis), this protein is CTP synthase.